The chain runs to 557 residues: Syntaxin-binding protein 4 (557 aa).

Residues Ser10 and Ser12 each carry the phosphoserine modification. The 87-residue stretch at 19–105 (AFRVITVTKE…RSESPWEIAF (87 aa)) folds into the PDZ domain. The residue at position 99 (Ser99) is a Phosphoserine; by PKB/AKT2. A compositionally biased stretch (low complexity) spans 142 to 154 (PSETLLPKTSSTP). Residues 142–214 (PSETLLPKTS…SGPQGKISLN (73 aa)) are disordered. Residues 179-194 (SPITSLDNSPADTSNA) are compositionally biased toward polar residues. Phosphoserine is present on Ser216. Residues 298–408 (ADEVGKLRQE…NKESVQDLRK (111 aa)) are a coiled coil. Phosphoserine is present on Ser467. In terms of domain architecture, WW spans 500 to 533 (DCLPYGWEEAYTADGIKYFINHVTQTTSWIHPVM).

Interacts with STX4A. In terms of processing, phosphorylated on Ser-99 by PKB/AKT2 after insulin treatment. Phosphorylation on Ser-99 abolishes the interaction with STX4A. As to expression, detected in skeletal muscle, heart, testis, adipocytes and pancreatic islet cells.

It localises to the cytoplasm. Functionally, plays a role in the translocation of transport vesicles from the cytoplasm to the plasma membrane. Inhibits the translocation of SLC2A4 from intracellular vesicles to the plasma membrane by STX4A binding and preventing the interaction between STX4A and VAMP2. Stimulation with insulin disrupts the interaction with STX4A, leading to increased levels of SLC2A4 at the plasma membrane. May also play a role in the regulation of insulin release by pancreatic beta cells after stimulation by glucose. This Mus musculus (Mouse) protein is Syntaxin-binding protein 4 (Stxbp4).